The chain runs to 243 residues: Chromosome partition protein MukE (243 aa).

Positions 223–243 (LMENDTKSADEIDEEFDGEQE) are disordered. Residues 233–243 (EIDEEFDGEQE) are compositionally biased toward acidic residues.

It belongs to the MukE family. In terms of assembly, interacts, and probably forms a ternary complex, with MukF and MukB. The complex formation is stimulated by calcium or magnesium.

Its subcellular location is the cytoplasm. The protein resides in the nucleoid. Involved in chromosome condensation, segregation and cell cycle progression. May participate in facilitating chromosome segregation by condensation DNA from both sides of a centrally located replisome during cell division. Probably acts via its interaction with MukB and MukF. This Haemophilus influenzae (strain ATCC 51907 / DSM 11121 / KW20 / Rd) protein is Chromosome partition protein MukE.